A 238-amino-acid polypeptide reads, in one-letter code: Purine nucleoside phosphorylase DeoD-type (238 aa).

An a purine D-ribonucleoside-binding site is contributed by His4. Phosphate contacts are provided by residues Gly20, Arg24, Arg43, and Arg87–Ser90. Residues Glu179 to Glu181 and Ser203 to Asp204 contribute to the a purine D-ribonucleoside site. Residue Asp204 is the Proton donor of the active site.

This sequence belongs to the PNP/UDP phosphorylase family. In terms of assembly, homohexamer; trimer of homodimers.

It carries out the reaction a purine D-ribonucleoside + phosphate = a purine nucleobase + alpha-D-ribose 1-phosphate. The catalysed reaction is a purine 2'-deoxy-D-ribonucleoside + phosphate = a purine nucleobase + 2-deoxy-alpha-D-ribose 1-phosphate. In terms of biological role, catalyzes the reversible phosphorolytic breakdown of the N-glycosidic bond in the beta-(deoxy)ribonucleoside molecules, with the formation of the corresponding free purine bases and pentose-1-phosphate. The chain is Purine nucleoside phosphorylase DeoD-type from Haemophilus influenzae (strain PittEE).